A 37-amino-acid polypeptide reads, in one-letter code: Large ribosomal subunit protein bL36 (37 aa).

It belongs to the bacterial ribosomal protein bL36 family.

The protein is Large ribosomal subunit protein bL36 of Pelotomaculum thermopropionicum (strain DSM 13744 / JCM 10971 / SI).